The chain runs to 176 residues: Ribosome maturation factor RimM (176 aa).

The region spanning lysine 102 to tryptophan 175 is the PRC barrel domain.

This sequence belongs to the RimM family. Binds ribosomal protein uS19.

It localises to the cytoplasm. In terms of biological role, an accessory protein needed during the final step in the assembly of 30S ribosomal subunit, possibly for assembly of the head region. Essential for efficient processing of 16S rRNA. May be needed both before and after RbfA during the maturation of 16S rRNA. It has affinity for free ribosomal 30S subunits but not for 70S ribosomes. In Buchnera aphidicola subsp. Acyrthosiphon pisum (strain APS) (Acyrthosiphon pisum symbiotic bacterium), this protein is Ribosome maturation factor RimM.